The chain runs to 458 residues: PH domain-containing protein DDB_G0274775 (458 aa).

In terms of domain architecture, PH spans 15–112 (PSDREGWLTK…WMESIKRNLD (98 aa)). The tract at residues 111 to 154 (LDGEGGMKSGGNDIVSSPKINSEPTPKVNQNGSAPEKSSLSSPR) is disordered. Positions 124–142 (IVSSPKINSEPTPKVNQNG) are enriched in polar residues. Positions 143-154 (SAPEKSSLSSPR) are enriched in low complexity.

This is PH domain-containing protein DDB_G0274775 from Dictyostelium discoideum (Social amoeba).